We begin with the raw amino-acid sequence, 69 residues long: Putative membrane protein insertion efficiency factor (69 aa).

The protein belongs to the UPF0161 family.

The protein resides in the cell membrane. Could be involved in insertion of integral membrane proteins into the membrane. The chain is Putative membrane protein insertion efficiency factor from Alkaliphilus oremlandii (strain OhILAs) (Clostridium oremlandii (strain OhILAs)).